Reading from the N-terminus, the 420-residue chain is Serine--tRNA ligase (420 aa).

225-227 (TLE) is a binding site for L-serine. 256 to 258 (RQE) provides a ligand contact to ATP. Position 279 (Glu-279) interacts with L-serine. 343–346 (EVSS) contributes to the ATP binding site. Thr-379 contributes to the L-serine binding site.

It belongs to the class-II aminoacyl-tRNA synthetase family. Type-1 seryl-tRNA synthetase subfamily. As to quaternary structure, homodimer. The tRNA molecule binds across the dimer.

It localises to the cytoplasm. The catalysed reaction is tRNA(Ser) + L-serine + ATP = L-seryl-tRNA(Ser) + AMP + diphosphate + H(+). It catalyses the reaction tRNA(Sec) + L-serine + ATP = L-seryl-tRNA(Sec) + AMP + diphosphate + H(+). The protein operates within aminoacyl-tRNA biosynthesis; selenocysteinyl-tRNA(Sec) biosynthesis; L-seryl-tRNA(Sec) from L-serine and tRNA(Sec): step 1/1. Functionally, catalyzes the attachment of serine to tRNA(Ser). Is also able to aminoacylate tRNA(Sec) with serine, to form the misacylated tRNA L-seryl-tRNA(Sec), which will be further converted into selenocysteinyl-tRNA(Sec). This chain is Serine--tRNA ligase, found in Mycoplasma pneumoniae (strain ATCC 29342 / M129 / Subtype 1) (Mycoplasmoides pneumoniae).